A 274-amino-acid polypeptide reads, in one-letter code: Large ribosomal subunit protein uL2 (274 aa).

The disordered stretch occupies residues 224–256; it reads VMNPVDHPHGGGEGKTGEGRHPVDPWGNLTKGY. The segment covering 229-246 has biased composition (basic and acidic residues); the sequence is DHPHGGGEGKTGEGRHPV.

It belongs to the universal ribosomal protein uL2 family. Part of the 50S ribosomal subunit. Forms a bridge to the 30S subunit in the 70S ribosome.

Its function is as follows. One of the primary rRNA binding proteins. Required for association of the 30S and 50S subunits to form the 70S ribosome, for tRNA binding and peptide bond formation. It has been suggested to have peptidyltransferase activity; this is somewhat controversial. Makes several contacts with the 16S rRNA in the 70S ribosome. This Polaromonas naphthalenivorans (strain CJ2) protein is Large ribosomal subunit protein uL2.